The chain runs to 45 residues: Photosystem I reaction center subunit IX 1 (45 aa).

A helical membrane pass occupies residues Trp-9–Val-29.

Belongs to the PsaJ family.

It is found in the cellular thylakoid membrane. In terms of biological role, may help in the organization of the PsaE and PsaF subunits. This Prochlorococcus marinus (strain NATL1A) protein is Photosystem I reaction center subunit IX 1.